A 316-amino-acid polypeptide reads, in one-letter code: Lipooligosaccharide heptosyltransferase 2 (316 aa).

Belongs to the glycosyltransferase 9 family.

The catalysed reaction is an L-alpha-D-Hep-(1-&gt;5)-[alpha-Kdo-(2-&gt;4)]-alpha-Kdo-(2-&gt;6)-lipid A + ADP-L-glycero-beta-D-manno-heptose = an L-alpha-D-Hep-(1-&gt;3)-L-alpha-D-Hep-(1-&gt;5)-[alpha-Kdo-(2-&gt;4)]-alpha-Kdo-(2-&gt;6)-lipid A + ADP + H(+). Its pathway is bacterial outer membrane biogenesis; LOS core biosynthesis. Functionally, glycosyltransferase involved in the biosynthesis of the core oligosaccharide region of lipooligosaccharide (LOS). Catalyzes the addition of the second heptose unit to the heptosyl-Kdo2-lipid A module. The chain is Lipooligosaccharide heptosyltransferase 2 from Campylobacter jejuni subsp. jejuni serotype O:6 (strain 81116 / NCTC 11828).